The following is a 206-amino-acid chain: Transmembrane emp24 domain-containing protein bai (206 aa).

An N-terminal signal peptide occupies residues Met-1–Ala-20. Over Val-21–Arg-172 the chain is Lumenal. A GOLD domain is found at Gln-30–Arg-140. Residues Val-173–Leu-193 form a helical membrane-spanning segment. The Cytoplasmic portion of the chain corresponds to Tyr-194–Glu-206.

This sequence belongs to the EMP24/GP25L family.

Its subcellular location is the membrane. Eca and bai are essential, though not redundant, for dorsoventral patterning of the embryo. Specifically required during early embryogenesis for the activity of maternal tkv, while the zygotic tkv is not affected. The protein is Transmembrane emp24 domain-containing protein bai of Drosophila ananassae (Fruit fly).